An 810-amino-acid polypeptide reads, in one-letter code: Leucine--tRNA ligase (810 aa).

Positions 43–53 (PYPSGTLHIGH) match the 'HIGH' region motif. The 'KMSKS' region signature appears at 578–582 (KMSKS). Residue Lys-581 coordinates ATP.

This sequence belongs to the class-I aminoacyl-tRNA synthetase family.

It localises to the cytoplasm. It catalyses the reaction tRNA(Leu) + L-leucine + ATP = L-leucyl-tRNA(Leu) + AMP + diphosphate. This is Leucine--tRNA ligase from Solibacter usitatus (strain Ellin6076).